Consider the following 295-residue polypeptide: 4-diphosphocytidyl-2-C-methyl-D-erythritol kinase (295 aa).

K18 is a catalytic residue. Residue 101–111 coordinates ATP; sequence PMGGGIGGGSS. D143 is a catalytic residue.

It belongs to the GHMP kinase family. IspE subfamily.

The catalysed reaction is 4-CDP-2-C-methyl-D-erythritol + ATP = 4-CDP-2-C-methyl-D-erythritol 2-phosphate + ADP + H(+). It participates in isoprenoid biosynthesis; isopentenyl diphosphate biosynthesis via DXP pathway; isopentenyl diphosphate from 1-deoxy-D-xylulose 5-phosphate: step 3/6. Catalyzes the phosphorylation of the position 2 hydroxy group of 4-diphosphocytidyl-2C-methyl-D-erythritol. The chain is 4-diphosphocytidyl-2-C-methyl-D-erythritol kinase from Vibrio cholerae serotype O1 (strain ATCC 39315 / El Tor Inaba N16961).